The chain runs to 373 residues: Arfaptin-1 (373 aa).

A disordered region spans residues 1-47; the sequence is MAQESPKNSAAEIPVTSNGEVDDAHEHGYNRDLKHSLPSGLGLSETQ. Ala-2 carries the N-acetylalanine modification. Position 5 is a phosphoserine (Ser-5). A compositionally biased stretch (basic and acidic residues) spans 22–35; the sequence is DDAHEHGYNRDLKH. Residues Ser-36, Ser-39, Ser-69, Ser-79, and Ser-132 each carry the phosphoserine modification. Residues 153–353 form the AH domain; that stretch reads TVDLELEAQI…NQKQLELTLK (201 aa). Position 361 is a phosphothreonine (Thr-361).

In terms of assembly, forms homodimers or heterodimers with ARFIP2. Interacts with non-myristoylated GTP-bound ARF3, but not to GDP-bound ARF3. Interacts with ARF1. Binds with lower affinity to ARF5 and with very little affinity to ARF6. Interacts with ARL1. Interacts with ATG9A. In terms of processing, phosphorylated by PRKD1; phosphorylation delocalizes ARFIP1 from the Golgi and disrupts its ability to inhibit the activity of ADP-ribosylation factor, an important component of the vesicle scission machinery.

The protein localises to the golgi apparatus. It is found in the trans-Golgi network membrane. Plays a role in controlling biogenesis of secretory granules at the trans-Golgi network. Mechanistically, binds ARF-GTP at the neck of a growing secretory granule precursor and forms a protective scaffold. Once the granule precursor has been completely loaded, active PRKD1 phosphorylates ARFIP1 and releases it from ARFs. In turn, ARFs induce fission. Through this mechanism, ensures proper secretory granule formation at the Golgi of pancreatic beta cells. The chain is Arfaptin-1 from Mus musculus (Mouse).